A 412-amino-acid polypeptide reads, in one-letter code: Acyl-[acyl-carrier-protein] hydrolase FATB2, chloroplastic (412 aa).

Low complexity-rich tracts occupy residues 1-13 (TAAS…VPSA) and 56-66 (GSSVGLKSGGL). The transit peptide at 1 to 46 (TAASSAFFPVPSADTSSRPGKLGNGPSSFSPLKPKSIPNGGLQVKA) directs the protein to the chloroplast. A disordered region spans residues 1–78 (TAASSAFFPV…HDDAPSAPPP (78 aa)). Residues N311, H313, and C348 contribute to the active site.

It belongs to the acyl-ACP thioesterase family.

It is found in the plastid. Its subcellular location is the chloroplast. It catalyses the reaction tetradecanoyl-[ACP] + H2O = tetradecanoate + holo-[ACP] + H(+). The catalysed reaction is hexadecanoyl-[ACP] + H2O = hexadecanoate + holo-[ACP] + H(+). Functionally, plays an essential role in chain termination during de novo fatty acid synthesis. Possesses thioesterase activity for medium chain acyl-ACPs. Substrate preference is 14:0 &gt; 16:0 &gt; 16:1. The polypeptide is Acyl-[acyl-carrier-protein] hydrolase FATB2, chloroplastic (Cuphea viscosissima (Blue waxweed)).